The chain runs to 248 residues: Probable transcriptional regulatory protein RPA1097 (248 aa).

Positions 1 to 21 are disordered; the sequence is MAGHSQFKNIMHRKGRQDAQR.

The protein belongs to the TACO1 family.

The protein localises to the cytoplasm. In Rhodopseudomonas palustris (strain ATCC BAA-98 / CGA009), this protein is Probable transcriptional regulatory protein RPA1097.